The chain runs to 426 residues: Protein arginine methyltransferase NDUFAF7 homolog, mitochondrial (426 aa).

Belongs to the NDUFAF7 family.

It is found in the mitochondrion. It carries out the reaction L-arginyl-[protein] + 2 S-adenosyl-L-methionine = N(omega),N(omega)'-dimethyl-L-arginyl-[protein] + 2 S-adenosyl-L-homocysteine + 2 H(+). In terms of biological role, arginine methyltransferase involved in the assembly or stability of mitochondrial NADH:ubiquinone oxidoreductase complex (complex I). This is Protein arginine methyltransferase NDUFAF7 homolog, mitochondrial from Caenorhabditis elegans.